Consider the following 555-residue polypeptide: Probable terpene synthase 6 (555 aa).

Positions 309, 313, and 460 each coordinate Mg(2+). The DDXXD motif signature appears at 309–313; it reads DDTYD.

This sequence belongs to the terpene synthase family. Mg(2+) is required as a cofactor.

Its function is as follows. Probable sesquiterpene synthase. The sequence is that of Probable terpene synthase 6 (TPS6) from Ricinus communis (Castor bean).